Here is a 247-residue protein sequence, read N- to C-terminus: PF03932 family protein CutC (247 aa).

The span at 205 to 222 (KSTRPSLMESNSSAQMGS) shows a compositional bias: polar residues. Residues 205-226 (KSTRPSLMESNSSAQMGSNDVD) form a disordered region.

This sequence belongs to the CutC family.

The protein localises to the cytoplasm. The polypeptide is PF03932 family protein CutC (Vibrio atlanticus (strain LGP32) (Vibrio splendidus (strain Mel32))).